Here is a 587-residue protein sequence, read N- to C-terminus: 2-succinyl-5-enolpyruvyl-6-hydroxy-3-cyclohexene-1-carboxylate synthase (587 aa).

Belongs to the TPP enzyme family. MenD subfamily. As to quaternary structure, homodimer. Requires Mg(2+) as cofactor. Mn(2+) is required as a cofactor. The cofactor is thiamine diphosphate.

The enzyme catalyses isochorismate + 2-oxoglutarate + H(+) = 5-enolpyruvoyl-6-hydroxy-2-succinyl-cyclohex-3-ene-1-carboxylate + CO2. Its pathway is quinol/quinone metabolism; 1,4-dihydroxy-2-naphthoate biosynthesis; 1,4-dihydroxy-2-naphthoate from chorismate: step 2/7. It functions in the pathway cofactor biosynthesis; phylloquinone biosynthesis. Functionally, catalyzes the thiamine diphosphate-dependent decarboxylation of 2-oxoglutarate and the subsequent addition of the resulting succinic semialdehyde-thiamine pyrophosphate anion to isochorismate to yield 2-succinyl-5-enolpyruvyl-6-hydroxy-3-cyclohexene-1-carboxylate (SEPHCHC). The sequence is that of 2-succinyl-5-enolpyruvyl-6-hydroxy-3-cyclohexene-1-carboxylate synthase from Prochlorococcus marinus (strain MIT 9301).